The following is a 679-amino-acid chain: Penicillin-binding protein 1A (679 aa).

The span at 1-14 (MTERKREHKDRKQN) shows a compositional bias: basic residues. The segment at 1 to 20 (MTERKREHKDRKQNKNSPKN) is disordered. The Cytoplasmic portion of the chain corresponds to 1–30 (MTERKREHKDRKQNKNSPKNQSKVTKFLKW). A helical; Signal-anchor for type II membrane protein transmembrane segment spans residues 31–51 (FFIGILLLGITAVTVVGIYVL). Residues 52–679 (SIIRSSPELD…QYKEVDNLVE (628 aa)) lie on the Extracellular side of the membrane. Residues 72–244 (SILYDDQGNF…PTSYDGLSEA (173 aa)) are transglycosylase. Residue Glu111 is the Proton donor; for transglycosylase activity of the active site. Residues 378-663 (ASATIIDYKT…TSPIFGKIMG (286 aa)) form a transpeptidase region. Residue Ser417 is the Acyl-ester intermediate; for transpeptidase activity of the active site.

It in the N-terminal section; belongs to the glycosyltransferase 51 family. In the C-terminal section; belongs to the transpeptidase family.

The protein resides in the cell membrane. It carries out the reaction [GlcNAc-(1-&gt;4)-Mur2Ac(oyl-L-Ala-gamma-D-Glu-L-Lys-D-Ala-D-Ala)](n)-di-trans,octa-cis-undecaprenyl diphosphate + beta-D-GlcNAc-(1-&gt;4)-Mur2Ac(oyl-L-Ala-gamma-D-Glu-L-Lys-D-Ala-D-Ala)-di-trans,octa-cis-undecaprenyl diphosphate = [GlcNAc-(1-&gt;4)-Mur2Ac(oyl-L-Ala-gamma-D-Glu-L-Lys-D-Ala-D-Ala)](n+1)-di-trans,octa-cis-undecaprenyl diphosphate + di-trans,octa-cis-undecaprenyl diphosphate + H(+). It catalyses the reaction Preferential cleavage: (Ac)2-L-Lys-D-Ala-|-D-Ala. Also transpeptidation of peptidyl-alanyl moieties that are N-acyl substituents of D-alanine.. The protein operates within cell wall biogenesis; peptidoglycan biosynthesis. Its function is as follows. Cell wall formation. Synthesis of cross-linked peptidoglycan from the lipid intermediates. The enzyme has a penicillin-insensitive transglycosylase N-terminal domain (formation of linear glycan strands) and a penicillin-sensitive transpeptidase C-terminal domain (cross-linking of the peptide subunits). The sequence is that of Penicillin-binding protein 1A (pbpA) from Clostridium perfringens (strain 13 / Type A).